The following is a 249-amino-acid chain: Probable phosphatase VV2_1469 (249 aa).

Zn(2+) is bound by residues His8, His10, His16, His41, Glu74, His102, His132, Asp194, and His196.

The protein belongs to the PHP family. Zn(2+) is required as a cofactor.

This chain is Probable phosphatase VV2_1469, found in Vibrio vulnificus (strain CMCP6).